The following is a 159-amino-acid chain: Na(+)/H(+) antiporter subunit E1 (159 aa).

4 helical membrane-spanning segments follow: residues 1 to 21 (MAIQ…VTNS), 27 to 47 (FVLG…VLPG), 60 to 80 (LIIT…KIIL), and 101 to 121 (WQLV…VLGI).

The protein belongs to the CPA3 antiporters (TC 2.A.63) subunit E family. May form a heterooligomeric complex that consists of seven subunits: mnhA1, mnhB1, mnhC1, mnhD1, mnhE1, mnhF1 and mnhG1.

The protein localises to the cell membrane. Mnh complex is a Na(+)/H(+) antiporter involved in Na(+) excretion. The sequence is that of Na(+)/H(+) antiporter subunit E1 (mnhE1) from Staphylococcus epidermidis (strain ATCC 35984 / DSM 28319 / BCRC 17069 / CCUG 31568 / BM 3577 / RP62A).